The chain runs to 177 residues: NADH-quinone oxidoreductase subunit B (177 aa).

4 residues coordinate [4Fe-4S] cluster: Cys56, Cys57, Cys121, and Cys151.

The protein belongs to the complex I 20 kDa subunit family. As to quaternary structure, NDH-1 is composed of 14 different subunits. Subunits NuoB, C, D, E, F, and G constitute the peripheral sector of the complex. It depends on [4Fe-4S] cluster as a cofactor.

It localises to the cell inner membrane. The enzyme catalyses a quinone + NADH + 5 H(+)(in) = a quinol + NAD(+) + 4 H(+)(out). Functionally, NDH-1 shuttles electrons from NADH, via FMN and iron-sulfur (Fe-S) centers, to quinones in the respiratory chain. Couples the redox reaction to proton translocation (for every two electrons transferred, four hydrogen ions are translocated across the cytoplasmic membrane), and thus conserves the redox energy in a proton gradient. The polypeptide is NADH-quinone oxidoreductase subunit B (Sphingopyxis alaskensis (strain DSM 13593 / LMG 18877 / RB2256) (Sphingomonas alaskensis)).